The chain runs to 516 residues: Flavonoid 3',5'-hydroxylase (516 aa).

Cys453 provides a ligand contact to heme.

This sequence belongs to the cytochrome P450 family. Heme is required as a cofactor.

The enzyme catalyses a 3',5'-unsubstituted flavanone + 2 reduced [NADPH--hemoprotein reductase] + 2 O2 = a 3',5'-dihydroxyflavanone + 2 oxidized [NADPH--hemoprotein reductase] + 2 H2O + 2 H(+). It participates in pigment biosynthesis; anthocyanin biosynthesis. In terms of biological role, catalyzes the 3'5'-hydroxylation of naringenin and eriodictyol to form 5,7,3,'4',5'-pentahydroxyflavanone and 3',5'-hydroxylation of dihydrokaempferol and dihydroquercetin to form dihydromyricetin. The protein is Flavonoid 3',5'-hydroxylase (CYP75A4) of Gentiana triflora (Clustered gentian).